The primary structure comprises 446 residues: Glutamyl-tRNA(Gln) amidotransferase subunit D (446 aa).

The region spanning 90–421 (SEVMIISTGG…DRIKEIMLTN (332 aa)) is the Asparaginase/glutaminase domain. Residues T100, T176, D177, and K255 contribute to the active site.

It belongs to the asparaginase 1 family. GatD subfamily. In terms of assembly, heterodimer of GatD and GatE.

It carries out the reaction L-glutamyl-tRNA(Gln) + L-glutamine + ATP + H2O = L-glutaminyl-tRNA(Gln) + L-glutamate + ADP + phosphate + H(+). Functionally, allows the formation of correctly charged Gln-tRNA(Gln) through the transamidation of misacylated Glu-tRNA(Gln) in organisms which lack glutaminyl-tRNA synthetase. The reaction takes place in the presence of glutamine and ATP through an activated gamma-phospho-Glu-tRNA(Gln). The GatDE system is specific for glutamate and does not act on aspartate. The chain is Glutamyl-tRNA(Gln) amidotransferase subunit D from Sulfolobus acidocaldarius (strain ATCC 33909 / DSM 639 / JCM 8929 / NBRC 15157 / NCIMB 11770).